The chain runs to 337 residues: Putative olfactory receptor 1F12P (337 aa).

Residues 1–25 (MEGKNQTNISEFLLLGFSSWQQQQV) lie on the Extracellular side of the membrane. N-linked (GlcNAc...) asparagine glycosylation is found at Asn-5 and Asn-8. A helical membrane pass occupies residues 26 to 49 (LLFALFLCLYLTGLFGNLLILLAI). The Cytoplasmic portion of the chain corresponds to 50 to 57 (GSDHCLHT). Residues 58 to 79 (PMYFFLANLSLVDLCLPSATVP) form a helical membrane-spanning segment. Topologically, residues 80–100 (KMLLNIQTQTQTISYPGCLAQ) are extracellular. Cys-97 and Cys-189 form a disulfide bridge. A helical membrane pass occupies residues 101–120 (MYFCMMFANMDNFLLTVMAY). Residues 121-139 (DRYVAICHPLHYSTIMALR) lie on the Cytoplasmic side of the membrane. A helical membrane pass occupies residues 140–158 (LCASLVAAPWVIAILNPLL). Residues 159–196 (HTLMMAHLHFCSDNVIHHFFCDINSLLPLSCSDTSLNQ) are Extracellular-facing. Residues 197–219 (LSVLATVGLIFVVPSVCILVSYI) form a helical membrane-spanning segment. The Cytoplasmic segment spans residues 220-236 (LIVSAVMKVPSAQGKLK). A helical membrane pass occupies residues 237-259 (AFSTCGSHLALVILFYGAITGVY). Over 260–272 (MSPLSNHSTEKDS) the chain is Extracellular. The N-linked (GlcNAc...) asparagine glycan is linked to Asn-265. A helical membrane pass occupies residues 273–292 (AASVIFMVVAPVLNPFIYSL). The Cytoplasmic segment spans residues 293-337 (RNNELKGTLKKTLSRPGAVAHACNPSTLGGRGGWIMRSGDRDHPG).

It belongs to the G-protein coupled receptor 1 family.

The protein localises to the cell membrane. Its function is as follows. Odorant receptor. The chain is Putative olfactory receptor 1F12P from Homo sapiens (Human).